Here is a 304-residue protein sequence, read N- to C-terminus: L-lactate dehydrogenase (304 aa).

Residues Val11, Asp32, Arg37, and 76–77 (GA) each bind NAD(+). Substrate is bound by residues Gln79, Arg85, and 117–120 (NPVD). Ser138 provides a ligand contact to NAD(+). 143–146 (DSAR) is a substrate binding site. Residues Arg148 and His163 each coordinate beta-D-fructose 1,6-bisphosphate. His170 acts as the Proton acceptor in catalysis. A substrate-binding site is contributed by Thr225.

This sequence belongs to the LDH/MDH superfamily. LDH family. As to quaternary structure, homotetramer.

It is found in the cytoplasm. It catalyses the reaction (S)-lactate + NAD(+) = pyruvate + NADH + H(+). It participates in fermentation; pyruvate fermentation to lactate; (S)-lactate from pyruvate: step 1/1. With respect to regulation, allosterically activated by fructose 1,6-bisphosphate (FBP). Catalyzes the conversion of lactate to pyruvate. The protein is L-lactate dehydrogenase of Deinococcus radiodurans (strain ATCC 13939 / DSM 20539 / JCM 16871 / CCUG 27074 / LMG 4051 / NBRC 15346 / NCIMB 9279 / VKM B-1422 / R1).